Reading from the N-terminus, the 98-residue chain is DNA-binding protein Fis (98 aa).

A DNA-binding region (H-T-H motif) is located at residues 74–93 (QTRAALMMGINRGTLRKKLK).

The protein belongs to the transcriptional regulatory Fis family. In terms of assembly, homodimer.

Its function is as follows. Activates ribosomal RNA transcription. Plays a direct role in upstream activation of rRNA promoters. In Enterobacter sp. (strain 638), this protein is DNA-binding protein Fis.